Here is a 511-residue protein sequence, read N- to C-terminus: Zinc finger and BTB domain-containing protein 45 (511 aa).

The region spanning 33 to 96 is the BTB domain; the sequence is CDVTVRIREA…LYSGSLVVAQ (64 aa). A compositionally biased stretch (low complexity) spans 159 to 168; it reads ARPPGHPGAA. Disordered regions lie at residues 159-241 and 294-403; these read ARPP…PDCA and EDGA…PPTY. A compositionally biased stretch (acidic residues) spans 206–224; that stretch reads RGDEDDEESDDETDGEDGE. Over residues 339 to 360 the composition is skewed to pro residues; sequence PGPPAPPPSAPSGPAPAPPPAF. Residues 378 to 397 show a composition bias toward low complexity; it reads PAPSAAPTTAPSGTPARTPG. C2H2-type zinc fingers lie at residues 403 to 425, 431 to 453, 459 to 481, and 486 to 508; these read YECSHCRKTFSSRKNYTKHMFIH, HQCAVCWRSFSLRDYLLKHMVTH, FQCAVCAKRFTQKSSLNVHMRTH, and APCPACGKVFSHRALLERHLAAH.

Belongs to the krueppel C2H2-type zinc-finger protein family.

Its subcellular location is the nucleus. In terms of biological role, may be involved in transcriptional regulation. In the central nervous system, may play a role in glial cell differentiation. This Homo sapiens (Human) protein is Zinc finger and BTB domain-containing protein 45 (ZBTB45).